Here is a 1943-residue protein sequence, read N- to C-terminus: Beta-L-arabinobiosidase (1943 aa).

The tat-type signal signal peptide spans 1–32 (MHHSTRKRWLASIGAVAAVATLATGGAVTAQA). F5/8 type C domains lie at 892–1049 (TNVD…AYNT) and 1142–1302 (SKEI…AYAI). Positions 1061-1157 (TPQVDAYVSS…HGIPSDGTVN (97 aa)) constitute a PKD domain. 3 FIVAR domains span residues 1678–1716 (ANGL…EQVA), 1746–1790 (DAAK…AAVQ), and 1823–1864 (QAKK…VDAA). Residues 1875-1906 (TKVEQKPGSQQPGVTDTDKDDKDNKGDRVPPT) form a disordered region. The span at 1890–1902 (DTDKDDKDNKGDR) shows a compositional bias: basic and acidic residues. The chain crosses the membrane as a helical span at residues 1908–1928 (AAVSVVAAAAVLLTAAGVTIL).

It belongs to the glycosyl hydrolase 121 family. Predicted to be exported by the Tat system. The position of the signal peptide cleavage has not been experimentally proven.

The protein resides in the membrane. It carries out the reaction 4-O-(beta-L-arabinofuranosyl-(1-&gt;2)-beta-L-arabinofuranosyl-(1-&gt;2)-beta-L-arabinofuranosyl)-(2S,4S)-4-hydroxyproline + H2O = 4-O-(beta-L-arabinofuranosyl)-(2S,4S)-4-hydroxyproline + beta-L-arabinofuranosyl-(1-&gt;2)-beta-L-arabinofuranose. In terms of biological role, beta-L-arabinobiosidase that removes L-arabinofuranose-beta-1,2-L-arabinofuranose disaccharide from various substrates such as carrot extensin and potato lectin. Also acts on L-arabinofuranose (Ara)-beta-1,2-Ara-beta-1,2-Ara-beta-Hyp (Ara(3)-Hyp) but not on Ara-beta-1,3-Ara-beta-1,2-Ara-beta-1,2-Ara-beta--Hyp (Ara(4)-Hyp) or Ara-beta-1,2-Ara-beta-Hyp (Ara(2)-Hyp), suggesting a specificity for unmodified Ara(3)-Hyp substrate. In the presence of 1-alkanols, shows transglycosylation activity, retaining the anomeric configuration of the arabinofuranose residue. This is Beta-L-arabinobiosidase (hypBA2) from Bifidobacterium longum subsp. longum (strain ATCC 15707 / DSM 20219 / JCM 1217 / NCTC 11818 / E194b).